The sequence spans 200 residues: ATP-dependent Clp protease proteolytic subunit (200 aa).

S97 acts as the Nucleophile in catalysis. H122 is an active-site residue.

The protein belongs to the peptidase S14 family. Fourteen ClpP subunits assemble into 2 heptameric rings which stack back to back to give a disk-like structure with a central cavity, resembling the structure of eukaryotic proteasomes.

The protein resides in the cytoplasm. The catalysed reaction is Hydrolysis of proteins to small peptides in the presence of ATP and magnesium. alpha-casein is the usual test substrate. In the absence of ATP, only oligopeptides shorter than five residues are hydrolyzed (such as succinyl-Leu-Tyr-|-NHMec, and Leu-Tyr-Leu-|-Tyr-Trp, in which cleavage of the -Tyr-|-Leu- and -Tyr-|-Trp bonds also occurs).. Functionally, cleaves peptides in various proteins in a process that requires ATP hydrolysis. Has a chymotrypsin-like activity. Plays a major role in the degradation of misfolded proteins. In Oleidesulfovibrio alaskensis (strain ATCC BAA-1058 / DSM 17464 / G20) (Desulfovibrio alaskensis), this protein is ATP-dependent Clp protease proteolytic subunit.